The following is a 152-amino-acid chain: Nucleoside diphosphate kinase B (152 aa).

An interaction with AKAP13 region spans residues 1-66 (MANLERTFIA…DRPFFPGLVK (66 aa)). Residues K12, F60, R88, T94, R105, and N115 each coordinate ATP. Residue H118 is the Pros-phosphohistidine intermediate of the active site.

It belongs to the NDK family. As to quaternary structure, hexamer of two different chains: An and B (A6, A5B, A4B2, A3B3, A2B4, AB5, B6). Interacts with CAPN8. Interacts with AKAP13. Interacts with ITGB1BP1 (via C-terminal domain region). Interacts with BCL2L10. Mg(2+) is required as a cofactor. Post-translationally, the N-terminus is blocked.

It localises to the cytoplasm. Its subcellular location is the cell projection. The protein localises to the lamellipodium. The protein resides in the ruffle. It is found in the nucleus. The enzyme catalyses a 2'-deoxyribonucleoside 5'-diphosphate + ATP = a 2'-deoxyribonucleoside 5'-triphosphate + ADP. It carries out the reaction a ribonucleoside 5'-diphosphate + ATP = a ribonucleoside 5'-triphosphate + ADP. The catalysed reaction is ATP + protein L-histidine = ADP + protein N-phospho-L-histidine.. In terms of biological role, major role in the synthesis of nucleoside triphosphates other than ATP. The ATP gamma phosphate is transferred to the NDP beta phosphate via a ping-pong mechanism, using a phosphorylated active-site intermediate. Negatively regulates Rho activity by interacting with AKAP13/LBC. Acts as a transcriptional activator of the MYC gene; binds DNA non-specifically. Binds to both single-stranded guanine- and cytosine-rich strands within the nuclease hypersensitive element (NHE) III(1) region of the MYC gene promoter. Does not bind to duplex NHE III(1). Has G-quadruplex (G4) DNA-binding activity, which is independent of its nucleotide-binding and kinase activity. Binds both folded and unfolded G4 with similar low nanomolar affinities. Stabilizes folded G4s regardless of whether they are prefolded or not. Exhibits histidine protein kinase activity. The chain is Nucleoside diphosphate kinase B (Nme2) from Rattus norvegicus (Rat).